Consider the following 184-residue polypeptide: Photosystem I assembly protein Ycf4 (184 aa).

A run of 2 helical transmembrane segments spans residues 21–43 (NFCW…ISSY) and 63–85 (GLVM…CAIS).

This sequence belongs to the Ycf4 family.

Its subcellular location is the plastid. It is found in the chloroplast thylakoid membrane. In terms of biological role, seems to be required for the assembly of the photosystem I complex. In Spinacia oleracea (Spinach), this protein is Photosystem I assembly protein Ycf4.